A 196-amino-acid polypeptide reads, in one-letter code: Transcription repressor OFP10 (196 aa).

The OVATE domain maps to 100–159 (MAKESINPFEDYKKSMNQMIEERYIETESELKELLRCFLDINPSPQHNLIVRAFVDVCSH).

As to expression, expressed in roots, cauline leaves, shoots, stems, flower buds and siliques.

It is found in the nucleus. Functionally, transcriptional repressor that may regulate multiple aspects of plant growth and development through the regulation of BEL1-LIKE (BLH) and KNOX TALE (KNAT) homeodomain transcription factors. The protein is Transcription repressor OFP10 (OFP10) of Arabidopsis thaliana (Mouse-ear cress).